The sequence spans 156 residues: Small ribosomal subunit protein uS7 (156 aa).

Belongs to the universal ribosomal protein uS7 family. In terms of assembly, part of the 30S ribosomal subunit. Contacts proteins S9 and S11.

In terms of biological role, one of the primary rRNA binding proteins, it binds directly to 16S rRNA where it nucleates assembly of the head domain of the 30S subunit. Is located at the subunit interface close to the decoding center, probably blocks exit of the E-site tRNA. The chain is Small ribosomal subunit protein uS7 from Salinispora tropica (strain ATCC BAA-916 / DSM 44818 / JCM 13857 / NBRC 105044 / CNB-440).